The sequence spans 280 residues: UPF0276 protein NGO_1946 (280 aa).

It belongs to the UPF0276 family.

This chain is UPF0276 protein NGO_1946, found in Neisseria gonorrhoeae (strain ATCC 700825 / FA 1090).